The sequence spans 1380 residues: DNA-directed RNA polymerase subunit beta (1380 aa).

This sequence belongs to the RNA polymerase beta chain family. In terms of assembly, the RNAP catalytic core consists of 2 alpha, 1 beta, 1 beta' and 1 omega subunit. When a sigma factor is associated with the core the holoenzyme is formed, which can initiate transcription.

The enzyme catalyses RNA(n) + a ribonucleoside 5'-triphosphate = RNA(n+1) + diphosphate. DNA-dependent RNA polymerase catalyzes the transcription of DNA into RNA using the four ribonucleoside triphosphates as substrates. The protein is DNA-directed RNA polymerase subunit beta of Rhizobium meliloti (strain 1021) (Ensifer meliloti).